The following is a 522-amino-acid chain: Colicin-E1 (522 aa).

Disordered regions lie at residues 26–52 (NGTPDGSGSGGGGGKGGSKSESSAAIH) and 136–165 (EEKARKEAEAAEKAFQEAEQRRKEIEREKA). Gly residues predominate over residues 30–42 (DGSGSGGGGGKGG). The next 2 membrane-spanning stretches (helical) occupy residues 471-487 (AADAGVSYVVALLFSLL) and 494-510 (IWGIAIVTGILCSYIDK).

Belongs to the channel forming colicin family.

It localises to the cell membrane. In terms of biological role, this colicin is a channel-forming colicin. This class of transmembrane toxins depolarize the cytoplasmic membrane, leading to dissipation of cellular energy. Its function is as follows. Colicins are polypeptide toxins produced by and active against E.coli and closely related bacteria. In Escherichia coli, this protein is Colicin-E1 (cea).